The primary structure comprises 334 residues: Malate dehydrogenase, cytoplasmic (334 aa).

Ser-2 is subject to N-acetylserine. NAD(+)-binding positions include Gly-11 to Ala-17 and Asp-42. Substrate-binding residues include Arg-92 and Arg-98. Position 105 (Asn-105) interacts with NAD(+). Lys-110 carries the post-translational modification N6-succinyllysine. Gln-112 lines the NAD(+) pocket. An N6-acetyllysine mark is found at Lys-118 and Lys-121. Val-129–Asn-131 lines the NAD(+) pocket. Substrate is bound by residues Asn-131 and Arg-162. His-187 functions as the Proton acceptor in the catalytic mechanism. Lys-214 is modified (N6-succinyllysine). The residue at position 217 (Ser-217) is a Phosphoserine. Arg-230 bears the Omega-N-methylarginine mark. Ser-241 is modified (phosphoserine). At Lys-298 the chain carries N6-acetyllysine; alternate. Residue Lys-298 is modified to N6-succinyllysine; alternate. Ser-309 carries the post-translational modification Phosphoserine. Lys-318 is modified (N6-succinyllysine). Residues Ser-332 and Ser-333 each carry the phosphoserine modification.

The protein belongs to the LDH/MDH superfamily. MDH type 2 family. Homodimer. ISGylated. In terms of processing, acetylation at Lys-118 dramatically enhances enzymatic activity and promotes adipogenic differentiation.

It localises to the cytoplasm. Its subcellular location is the cytosol. It catalyses the reaction (S)-malate + NAD(+) = oxaloacetate + NADH + H(+). The enzyme catalyses (2R)-2-hydroxy-3-(4-hydroxyphenyl)propanoate + NAD(+) = 3-(4-hydroxyphenyl)pyruvate + NADH + H(+). It carries out the reaction (S)-2-hydroxyglutarate + NAD(+) = 2-oxoglutarate + NADH + H(+). Catalyzes the reduction of aromatic alpha-keto acids in the presence of NADH. Plays essential roles in the malate-aspartate shuttle and the tricarboxylic acid cycle, important in mitochondrial NADH supply for oxidative phosphorylation. Catalyzes the reduction of 2-oxoglutarate to 2-hydroxyglutarate, leading to elevated reactive oxygen species (ROS). The polypeptide is Malate dehydrogenase, cytoplasmic (Homo sapiens (Human)).